A 354-amino-acid chain; its full sequence is Sphingosine-1-phosphate phosphatase 2 (354 aa).

Transmembrane regions (helical) follow at residues 43–63 (YLFR…FLPF), 76–96 (LVVI…ILKW), 115–135 (YGMP…LLIS), and 140–160 (YQYP…LVCL). The interval 91 to 99 (KDILKWPRP) is phosphatase sequence motif I. Positions 118 to 121 (PSTH) are phosphatase sequence motif II. His121 functions as the Proton donor in the catalytic mechanism. The phosphatase sequence motif III stretch occupies residues 161-172 (SRLYTGMHTVLD). His168 functions as the Nucleophile in the catalytic mechanism. A run of 5 helical transmembrane segments spans residues 173-193 (ILGG…AWTL), 202-222 (PLFP…YPVS), 235-255 (IVAA…FQLV), 273-293 (TDML…ILLV), and 334-354 (TSVG…LGLL).

The protein belongs to the type 2 lipid phosphate phosphatase family. Highly expressed in pancreatic islets. Expressed in lung, small interstince, colon, kideny and brain.

Its subcellular location is the endoplasmic reticulum membrane. The enzyme catalyses sphinganine 1-phosphate + H2O = sphinganine + phosphate. The catalysed reaction is sphing-4-enine 1-phosphate + H2O = sphing-4-enine + phosphate. It catalyses the reaction (4R)-hydroxysphinganine 1-phosphate + H2O = (4R)-hydroxysphinganine + phosphate. Its function is as follows. Has specific phosphohydrolase activity towards sphingoid base 1-phosphates. Has high phosphohydrolase activity against dihydrosphingosine-1-phosphate and sphingosine-1-phosphate (S1P) in vitro. Sphingosine-1-phosphate phosphatase activity is needed for efficient recycling of sphingosine into the sphingolipid synthesis pathway. May play a role in attenuating intracellular sphingosine 1-phosphate (S1P) signaling. May play a role in pro-inflammatory signaling. Plays a role in the regulation of pancreatic islet beta-cell endoplasmic reticulum stress and proliferation. The protein is Sphingosine-1-phosphate phosphatase 2 of Mus musculus (Mouse).